A 991-amino-acid chain; its full sequence is Polyribonucleotide nucleotidyltransferase 2, mitochondrial (991 aa).

A mitochondrion-targeting transit peptide spans M1–P39. One can recognise a KH domain in the interval P609–V667. The S1 motif 1 domain maps to G678–K746. The segment at E813–A865 is disordered. Residues D822–P838 are compositionally biased toward basic and acidic residues. The 63-residue stretch at G925–E987 folds into the S1 motif 2 domain.

The protein belongs to the polyribonucleotide nucleotidyltransferase family.

The protein localises to the mitochondrion. The enzyme catalyses RNA(n+1) + phosphate = RNA(n) + a ribonucleoside 5'-diphosphate. Involved in the 3'-end maturation of mitochondrial mRNAs, rRNAs and tRNAs. Functions as a poly(A) mRNA 3'-5' degrading phosphorylase and is required for the degradation of highly expressed transcripts of non-coding regions. The sequence is that of Polyribonucleotide nucleotidyltransferase 2, mitochondrial (PNP2) from Arabidopsis thaliana (Mouse-ear cress).